The chain runs to 195 residues: Small ribosomal subunit protein uS4B (195 aa).

Residues 107-181 (RRLQTQVYKL…VARRNAARKA (75 aa)) enclose the S4 RNA-binding domain. A disordered region spans residues 161 to 195 (TSPFGGARPGRVARRNAARKAEASGEAAEEAEDEE). A Glycyl lysine isopeptide (Lys-Gly) (interchain with G-Cter in ubiquitin) cross-link involves residue Lys180. Ser184 is subject to Phosphoserine.

It belongs to the universal ribosomal protein uS4 family. Component of the small ribosomal subunit (SSU). Mature yeast ribosomes consist of a small (40S) and a large (60S) subunit. The 40S small subunit contains 1 molecule of ribosomal RNA (18S rRNA) and 33 different proteins (encoded by 57 genes). The large 60S subunit contains 3 rRNA molecules (25S, 5.8S and 5S rRNA) and 46 different proteins (encoded by 81 genes). Interacts with snoRNA U3. uS11 interacts with MPP10. Component of the ribosomal small subunit (SSU) processome composed of at least 40 protein subunits and snoRNA U3.

It is found in the cytoplasm. Its subcellular location is the nucleus. The protein resides in the nucleolus. In terms of biological role, component of the ribosome, a large ribonucleoprotein complex responsible for the synthesis of proteins in the cell. The small ribosomal subunit (SSU) binds messenger RNAs (mRNAs) and translates the encoded message by selecting cognate aminoacyl-transfer RNA (tRNA) molecules. The large subunit (LSU) contains the ribosomal catalytic site termed the peptidyl transferase center (PTC), which catalyzes the formation of peptide bonds, thereby polymerizing the amino acids delivered by tRNAs into a polypeptide chain. The nascent polypeptides leave the ribosome through a tunnel in the LSU and interact with protein factors that function in enzymatic processing, targeting, and the membrane insertion of nascent chains at the exit of the ribosomal tunnel. uS4 is involved in nucleolar processing of pre-18S ribosomal RNA and ribosome assembly. This is Small ribosomal subunit protein uS4B from Saccharomyces cerevisiae (strain ATCC 204508 / S288c) (Baker's yeast).